Consider the following 338-residue polypeptide: Ferredoxin--NADP reductase (338 aa).

FAD-binding residues include D38, Q46, Y51, V91, F125, D291, and T331.

Belongs to the ferredoxin--NADP reductase type 2 family. Homodimer. Requires FAD as cofactor.

The catalysed reaction is 2 reduced [2Fe-2S]-[ferredoxin] + NADP(+) + H(+) = 2 oxidized [2Fe-2S]-[ferredoxin] + NADPH. The protein is Ferredoxin--NADP reductase of Orientia tsutsugamushi (strain Boryong) (Rickettsia tsutsugamushi).